Reading from the N-terminus, the 358-residue chain is Magnesium-protoporphyrin IX monomethyl ester [oxidative] cyclase 2 (358 aa).

It belongs to the AcsF family. Fe cation is required as a cofactor.

The enzyme catalyses Mg-protoporphyrin IX 13-monomethyl ester + 3 NADPH + 3 O2 + 2 H(+) = 3,8-divinyl protochlorophyllide a + 3 NADP(+) + 5 H2O. It functions in the pathway porphyrin-containing compound metabolism; chlorophyll biosynthesis (light-independent). Catalyzes the formation of the isocyclic ring in chlorophyll biosynthesis. Mediates the cyclase reaction, which results in the formation of divinylprotochlorophyllide (Pchlide) characteristic of all chlorophylls from magnesium-protoporphyrin IX 13-monomethyl ester (MgPMME). The polypeptide is Magnesium-protoporphyrin IX monomethyl ester [oxidative] cyclase 2 (Nostoc sp. (strain PCC 7120 / SAG 25.82 / UTEX 2576)).